The primary structure comprises 418 residues: Homoaconitase large subunit (418 aa).

Cysteine 292, cysteine 352, and cysteine 355 together coordinate [4Fe-4S] cluster.

Belongs to the aconitase/IPM isomerase family. In terms of assembly, heterodimer of HacA and HacB. The cofactor is [4Fe-4S] cluster.

The enzyme catalyses (2R,3S)-homoisocitrate = cis-homoaconitate + H2O. It functions in the pathway amino-acid biosynthesis; L-lysine biosynthesis via AAA pathway; L-alpha-aminoadipate from 2-oxoglutarate: step 3/5. With respect to regulation, is not inhibited by lysine. In terms of biological role, catalyzes the reversible hydration of cis-homoaconitate ((Z)-but-1-ene-1,2,4-tricarboxylate) to homoisocitrate ((1R,2S)-1-hydroxybutane-1,2,4-tricarboxylate). Can catalyze neither the dehydration of (R)-homocitrate ((2R)-2-hydroxybutane-1,2,4-tricarboxylate) into cis-homoaconitate in vitro, nor the reverse reaction. Is not active toward (S)-homocitrate, cis-aconitate or citrate as substrate. The protein is Homoaconitase large subunit (hacA) of Thermus thermophilus (strain ATCC BAA-163 / DSM 7039 / HB27).